The following is a 418-amino-acid chain: Gamma-glutamyl phosphate reductase (418 aa).

This sequence belongs to the gamma-glutamyl phosphate reductase family.

The protein resides in the cytoplasm. The catalysed reaction is L-glutamate 5-semialdehyde + phosphate + NADP(+) = L-glutamyl 5-phosphate + NADPH + H(+). It functions in the pathway amino-acid biosynthesis; L-proline biosynthesis; L-glutamate 5-semialdehyde from L-glutamate: step 2/2. Its function is as follows. Catalyzes the NADPH-dependent reduction of L-glutamate 5-phosphate into L-glutamate 5-semialdehyde and phosphate. The product spontaneously undergoes cyclization to form 1-pyrroline-5-carboxylate. The chain is Gamma-glutamyl phosphate reductase from Chlorobium limicola (strain DSM 245 / NBRC 103803 / 6330).